We begin with the raw amino-acid sequence, 344 residues long: Dihydroorotase (344 aa).

Positions 14 and 16 each coordinate Zn(2+). Substrate-binding positions include 16 to 18 (HFR) and N42. Residues K100, H137, and H175 each contribute to the Zn(2+) site. An N6-carboxylysine modification is found at K100. H137 contacts substrate. A substrate-binding site is contributed by L220. D248 serves as a coordination point for Zn(2+). Residue D248 is part of the active site. H252 and A264 together coordinate substrate.

This sequence belongs to the metallo-dependent hydrolases superfamily. DHOase family. Class II DHOase subfamily. As to quaternary structure, homodimer. Zn(2+) is required as a cofactor.

It carries out the reaction (S)-dihydroorotate + H2O = N-carbamoyl-L-aspartate + H(+). It functions in the pathway pyrimidine metabolism; UMP biosynthesis via de novo pathway; (S)-dihydroorotate from bicarbonate: step 3/3. In terms of biological role, catalyzes the reversible cyclization of carbamoyl aspartate to dihydroorotate. The sequence is that of Dihydroorotase from Erythrobacter litoralis (strain HTCC2594).